We begin with the raw amino-acid sequence, 417 residues long: Serine hydroxymethyltransferase (417 aa).

Residues Leu121 and 125–127 (GHL) each bind (6S)-5,6,7,8-tetrahydrofolate. Lys229 bears the N6-(pyridoxal phosphate)lysine mark. 355-357 (SPF) serves as a coordination point for (6S)-5,6,7,8-tetrahydrofolate.

Belongs to the SHMT family. As to quaternary structure, homodimer. It depends on pyridoxal 5'-phosphate as a cofactor.

The protein localises to the cytoplasm. The catalysed reaction is (6R)-5,10-methylene-5,6,7,8-tetrahydrofolate + glycine + H2O = (6S)-5,6,7,8-tetrahydrofolate + L-serine. Its pathway is one-carbon metabolism; tetrahydrofolate interconversion. It participates in amino-acid biosynthesis; glycine biosynthesis; glycine from L-serine: step 1/1. Its function is as follows. Catalyzes the reversible interconversion of serine and glycine with tetrahydrofolate (THF) serving as the one-carbon carrier. This reaction serves as the major source of one-carbon groups required for the biosynthesis of purines, thymidylate, methionine, and other important biomolecules. Also exhibits THF-independent aldolase activity toward beta-hydroxyamino acids, producing glycine and aldehydes, via a retro-aldol mechanism. In Aeromonas salmonicida (strain A449), this protein is Serine hydroxymethyltransferase.